Here is a 428-residue protein sequence, read N- to C-terminus: Histidinol dehydrogenase (428 aa).

Residues Tyr127, Gln189, and Asn212 each coordinate NAD(+). Positions 235, 257, and 260 each coordinate substrate. Zn(2+)-binding residues include Gln257 and His260. Catalysis depends on proton acceptor residues Glu325 and His326. Residues His326, Asp359, Glu413, and His418 each coordinate substrate. Asp359 serves as a coordination point for Zn(2+). Position 418 (His418) interacts with Zn(2+).

The protein belongs to the histidinol dehydrogenase family. Zn(2+) serves as cofactor.

It catalyses the reaction L-histidinol + 2 NAD(+) + H2O = L-histidine + 2 NADH + 3 H(+). The protein operates within amino-acid biosynthesis; L-histidine biosynthesis; L-histidine from 5-phospho-alpha-D-ribose 1-diphosphate: step 9/9. Functionally, catalyzes the sequential NAD-dependent oxidations of L-histidinol to L-histidinaldehyde and then to L-histidine. The chain is Histidinol dehydrogenase from Prochlorococcus marinus subsp. pastoris (strain CCMP1986 / NIES-2087 / MED4).